Reading from the N-terminus, the 691-residue chain is TBC1 domain family member 15 (691 aa).

An N-acetylalanine modification is found at A2. Phosphoserine is present on residues S23, S70, S205, P213, and S274. Positions 346 to 556 constitute a Rab-GAP TBC domain; the sequence is GLSHALRKQA…RLWEVMWTEL (211 aa). Phosphoserine is present on residues S640 and S675. A Phosphothreonine modification is found at T689.

As to quaternary structure, interacts with non-phosphorylated form of RAB8A; phosphorylation of RAB8A at 'Thr-72' disrupts this interaction. Interacts with ARMC12. As to expression, ubiquitous.

The protein localises to the cytoplasm. Functionally, acts as a GTPase activating protein for RAB7A. Does not act on RAB4, RAB5 or RAB6. In Homo sapiens (Human), this protein is TBC1 domain family member 15 (TBC1D15).